Here is a 532-residue protein sequence, read N- to C-terminus: IQ domain-containing protein IQM4 (532 aa).

Disordered stretches follow at residues 47 to 67 (SRTN…TGME) and 85 to 104 (PMNK…RNSL). The span at 56–66 (NPQEKSPKTGM) shows a compositional bias: basic and acidic residues. Positions 85-94 (PMNKEDEEIV) are enriched in acidic residues. The IQ domain occupies 136–165 (LDAAATTLQKVYKSYRTRRNLADCAVVVEE). 2 disordered regions span residues 410 to 443 (SSGY…KERE) and 487 to 513 (PRIS…PRVR). Residues 487–496 (PRISPGSTRF) are compositionally biased toward polar residues. Over residues 499–509 (PYGPIPSPRPS) the composition is skewed to pro residues.

Expressed in roots, cauline leaves and flowers, and at lower levels in rosette leaves, stems and siliques.

It localises to the cytoplasm. Its subcellular location is the nucleus. In terms of biological role, may be involved in biotic and abiotic stress responses. The polypeptide is IQ domain-containing protein IQM4 (Arabidopsis thaliana (Mouse-ear cress)).